We begin with the raw amino-acid sequence, 237 residues long: Uridylate kinase (237 aa).

Position 11-14 (11-14 (KLSG)) interacts with ATP. Residue Gly-53 participates in UMP binding. ATP is bound by residues Gly-54 and Arg-58. Residues Asp-73 and 134-141 (TGNPFFTT) each bind UMP. 3 residues coordinate ATP: Thr-161, Tyr-167, and Asp-170.

The protein belongs to the UMP kinase family. As to quaternary structure, homohexamer.

The protein localises to the cytoplasm. It catalyses the reaction UMP + ATP = UDP + ADP. The protein operates within pyrimidine metabolism; CTP biosynthesis via de novo pathway; UDP from UMP (UMPK route): step 1/1. With respect to regulation, inhibited by UTP. Its function is as follows. Catalyzes the reversible phosphorylation of UMP to UDP. This Nitrosomonas eutropha (strain DSM 101675 / C91 / Nm57) protein is Uridylate kinase.